A 613-amino-acid chain; its full sequence is Xaa-Pro aminopeptidase ApepP (613 aa).

Substrate-binding residues include arginine 77 and histidine 388. 3 residues coordinate Mn(2+): aspartate 408, aspartate 419, and histidine 482. Positions 482, 491, and 517 each coordinate substrate. Glutamate 517 and glutamate 531 together coordinate Mn(2+).

The protein belongs to the peptidase M24B family. Mn(2+) serves as cofactor. In terms of tissue distribution, detected in gut, brain, testes and ovary.

Its subcellular location is the cytoplasm. The catalysed reaction is Release of any N-terminal amino acid, including proline, that is linked to proline, even from a dipeptide or tripeptide.. With respect to regulation, inhibited by the chelating agent EDTA. Divalent metal ions have substrate- and concentration-dependent effects on activity. Activity towards bradykinin is inhibited with increasing Mn(2+) concentration. Activity towards substance P is stimulated by low Mn(2+) concentrations (in the range 10 uM-1 mM) but inhibited by Mn(2+) concentrations in excess of 1 mM. Ca(2+), Mg(2+) and Co(2+) stimulate activity towards substance P at concentrations of 10-100 uM but are inhibitory at concentrations of 1 mM. Zn(2+), Ni(2+) and Cu(2+) strongly inhibit activity towards substance P at concentrations of 1 mM. Catalyzes the removal of a penultimate prolyl residue from the N-termini of peptides, such as Arg-Pro-Pro. This Drosophila melanogaster (Fruit fly) protein is Xaa-Pro aminopeptidase ApepP.